A 404-amino-acid polypeptide reads, in one-letter code: Probable tRNA sulfurtransferase (404 aa).

Residues 61-166 enclose the THUMP domain; sequence EAVSERLKDV…SGYSYIMCDE (106 aa). Residues 184-185, 209-210, arginine 266, glycine 288, and glutamine 297 contribute to the ATP site; these read LL and HF.

It belongs to the ThiI family.

It is found in the cytoplasm. It carries out the reaction [ThiI sulfur-carrier protein]-S-sulfanyl-L-cysteine + a uridine in tRNA + 2 reduced [2Fe-2S]-[ferredoxin] + ATP + H(+) = [ThiI sulfur-carrier protein]-L-cysteine + a 4-thiouridine in tRNA + 2 oxidized [2Fe-2S]-[ferredoxin] + AMP + diphosphate. It catalyses the reaction [ThiS sulfur-carrier protein]-C-terminal Gly-Gly-AMP + S-sulfanyl-L-cysteinyl-[cysteine desulfurase] + AH2 = [ThiS sulfur-carrier protein]-C-terminal-Gly-aminoethanethioate + L-cysteinyl-[cysteine desulfurase] + A + AMP + 2 H(+). The protein operates within cofactor biosynthesis; thiamine diphosphate biosynthesis. In terms of biological role, catalyzes the ATP-dependent transfer of a sulfur to tRNA to produce 4-thiouridine in position 8 of tRNAs, which functions as a near-UV photosensor. Also catalyzes the transfer of sulfur to the sulfur carrier protein ThiS, forming ThiS-thiocarboxylate. This is a step in the synthesis of thiazole, in the thiamine biosynthesis pathway. The sulfur is donated as persulfide by IscS. This is Probable tRNA sulfurtransferase from Bacillus cereus (strain AH820).